A 236-amino-acid polypeptide reads, in one-letter code: 3-oxoacyl-[acyl-carrier-protein] reductase (236 aa).

N-acetylmethionine is present on Met-1. NADP(+) is bound by residues 11 to 14 (SRGI) and 34 to 35 (RN). An N6-acetyllysine modification is found at Lys-40. Residues Asp-56 and 83–85 (AAG) contribute to the NADP(+) site. At Lys-96 the chain carries N6-acetyllysine. Position 134 (Ser-134) interacts with substrate. NADP(+)-binding positions include Tyr-147, Lys-151, and 180–182 (IRT). Tyr-147 serves as the catalytic Proton acceptor. Position 194 is an N6-acetyllysine (Lys-194).

The protein belongs to the short-chain dehydrogenases/reductases (SDR) family. As to quaternary structure, homotetramer (in vitro). Heterotetramer with HSD17B8; contains two molecules each of HSD17B8 and CBR4. Does not form homotetramers when HSD17B8 is coexpressed, only heterotetramers (in vitro).

The protein resides in the mitochondrion matrix. It carries out the reaction a (3R)-hydroxyacyl-[ACP] + NADP(+) = a 3-oxoacyl-[ACP] + NADPH + H(+). It catalyses the reaction a quinone + NADPH + H(+) = a quinol + NADP(+). Its pathway is lipid metabolism; fatty acid biosynthesis. Functionally, component of the heterotetramer complex KAR (3-ketoacyl-[acyl carrier protein] reductase or 3-ketoacyl-[ACP] reductase) that forms part of the mitochondrial fatty acid synthase (mtFAS). Beta-subunit of the KAR heterotetramer complex, responsible for the 3-ketoacyl-ACP reductase activity of the mtFAS, reduces 3-oxoacyl-[ACP] to (3R)-hydroxyacyl-[ACP] in a NADPH-dependent manner with no chain length preference, thereby participating in mitochondrial fatty acid biosynthesis. The homotetramer has NADPH-dependent quinone reductase activity (in vitro), hence could play a role in protection against cytotoxicity of exogenous quinones. As a heterotetramer, it can also reduce 9,10-phenanthrenequinone, 1,4-benzoquinone and various other o-quinones and p-quinones (in vitro). This is 3-oxoacyl-[acyl-carrier-protein] reductase (Cbr4) from Mus musculus (Mouse).